Here is a 451-residue protein sequence, read N- to C-terminus: Heme sensor protein HssS (451 aa).

Helical transmembrane passes span 9–29 and 164–184; these read IAIY…LFTN and IFLA…VIAS. An HAMP domain is found at 186–238; it reads YSIIKPVTALKNATTRIMKGDFSTPIKQTRHDEIGTLQSRFNTMRQNLGQVDQ. In terms of domain architecture, Histidine kinase spans 246-451; it reads NVSHEVKTPL…KTQFIVKLFI (206 aa). A Phosphohistidine; by autocatalysis modification is found at H249.

Post-translationally, autophosphorylated.

The protein localises to the cell membrane. The enzyme catalyses ATP + protein L-histidine = ADP + protein N-phospho-L-histidine.. Functionally, member of the two-component regulatory system HssS/HssR involved in intracellular heme homeostasis and tempering of staphylococcal virulence. HssS functions as a heme sensor histidine kinase which is autophosphorylated at a histidine residue and transfers its phosphate group to an aspartate residue of HssR. HssR/HssS activates the expression of HrtAB, an efflux pump, in response to extracellular heme, hemin, hemoglobin or blood. The sequence is that of Heme sensor protein HssS (hssS) from Staphylococcus epidermidis (strain ATCC 35984 / DSM 28319 / BCRC 17069 / CCUG 31568 / BM 3577 / RP62A).